We begin with the raw amino-acid sequence, 137 residues long: Ribonuclease kappa (137 aa).

2 consecutive transmembrane segments (helical) span residues 52–72 (ACGIVLSAWGVIMLIMLGIFF) and 104–124 (VSYNCFIAAGLYLLLGGFSFC).

The protein belongs to the RNase K family. In terms of assembly, interacts with the proton translocation complex V0 of the V-ATPase. Interacts with ATP6AP1. In terms of tissue distribution, widely expressed.

Its subcellular location is the endomembrane system. The protein localises to the cytoplasmic vesicle. It localises to the clathrin-coated vesicle membrane. Functionally, endoribonuclease which preferentially cleaves ApU and ApG phosphodiester bonds. Hydrolyzes UpU bonds at a lower rate. Regulates the activity of vacuolar (H+)-ATPase (V-ATPase) which is responsible for acidifying and maintaining the pH of intracellular compartments. Required at an early stage of receptor-mediated endocytosis. In terms of biological role, (Microbial infection) Required at an early stage of both clathrin-mediated and clathrin-independent endocytic uptake of a diverse set of viruses, including dengue, West Nile, Sindbis, Rift Valley Fever, influenza, and human rhinoviruses. This chain is Ribonuclease kappa (RNASEK), found in Homo sapiens (Human).